Here is a 499-residue protein sequence, read N- to C-terminus: Glutamyl-tRNA(Gln) amidotransferase subunit A (499 aa).

Catalysis depends on charge relay system residues K80 and S155. Residue S179 is the Acyl-ester intermediate of the active site.

It belongs to the amidase family. GatA subfamily. Heterotrimer of A, B and C subunits.

The enzyme catalyses L-glutamyl-tRNA(Gln) + L-glutamine + ATP + H2O = L-glutaminyl-tRNA(Gln) + L-glutamate + ADP + phosphate + H(+). Allows the formation of correctly charged Gln-tRNA(Gln) through the transamidation of misacylated Glu-tRNA(Gln) in organisms which lack glutaminyl-tRNA synthetase. The reaction takes place in the presence of glutamine and ATP through an activated gamma-phospho-Glu-tRNA(Gln). This Cupriavidus metallidurans (strain ATCC 43123 / DSM 2839 / NBRC 102507 / CH34) (Ralstonia metallidurans) protein is Glutamyl-tRNA(Gln) amidotransferase subunit A.